The following is a 284-amino-acid chain: Citrate lyase subunit beta-like protein (284 aa).

Residues Arg74 and Glu129 each contribute to the substrate site. Positions 129 and 155 each coordinate Mg(2+).

This sequence belongs to the HpcH/HpaI aldolase family. Citrate lyase beta subunit-like subfamily. In terms of assembly, homotrimer. The cofactor is Mg(2+).

Functionally, may play a role in fatty acid biosynthesis. In Deinococcus radiodurans (strain ATCC 13939 / DSM 20539 / JCM 16871 / CCUG 27074 / LMG 4051 / NBRC 15346 / NCIMB 9279 / VKM B-1422 / R1), this protein is Citrate lyase subunit beta-like protein.